Consider the following 91-residue polypeptide: PqqA binding protein 1 (91 aa).

Belongs to the PqqD family. Monomer. Interacts with PqqE.

The protein operates within cofactor biosynthesis; pyrroloquinoline quinone biosynthesis. In terms of biological role, functions as a PqqA binding protein and presents PqqA to PqqE, in the pyrroloquinoline quinone (PQQ) biosynthetic pathway. This is PqqA binding protein 1 (pqqD1) from Pseudomonas putida (strain ATCC 47054 / DSM 6125 / CFBP 8728 / NCIMB 11950 / KT2440).